Reading from the N-terminus, the 144-residue chain is MMQELGLQRFSNDVVRLDLTPPSQTSSTSLSIDEEESTEAKIRRLISEHPVIIFSRSSCCMCHVMKRLLATIGVIPTVIELDDHEVSSLPTALQDEYSGGVSVVGPPPAVFIGRECVGGLESLVALHLSGQLVPKLVQVGALWV.

In terms of domain architecture, Glutaredoxin spans 39-143 (EAKIRRLISE…PKLVQVGALW (105 aa)). Cys59 and Cys62 form a disulfide bridge.

Belongs to the glutaredoxin family. CC-type subfamily.

It is found in the cytoplasm. Its function is as follows. Has a glutathione-disulfide oxidoreductase activity in the presence of NADPH and glutathione reductase. Reduces low molecular weight disulfides and proteins. This Arabidopsis thaliana (Mouse-ear cress) protein is Glutaredoxin-C6 (GRXC6).